The chain runs to 218 residues: Glutathione S-transferase Mu 1 (218 aa).

In terms of domain architecture, GST N-terminal spans 2-88; that stretch reads PMILGYWDIR…YIARKHNLCG (87 aa). Position 7-8 (7-8) interacts with glutathione; that stretch reads YW. Thr34 bears the Phosphothreonine mark. Residues 43 to 46, Lys50, 59 to 60, and 72 to 73 contribute to the glutathione site; these read RSQW, NL, and QS. A GST C-terminal domain is found at 90–208; the sequence is TEEEKIRVDI…KSSRFLPRPV (119 aa). Tyr116 contacts substrate. Phosphoserine is present on Ser210.

It belongs to the GST superfamily. Mu family. As to quaternary structure, homodimer. In terms of tissue distribution, liver (at protein level).

It localises to the cytoplasm. The enzyme catalyses RX + glutathione = an S-substituted glutathione + a halide anion + H(+). It catalyses the reaction prostaglandin A2 + glutathione = prostaglandin A2-S-(R)-glutathione. The catalysed reaction is prostaglandin J2 + glutathione = prostaglandin J2-S-(R)-glutathione. It carries out the reaction prostaglandin J2 + glutathione = prostaglandin J2-S-(S)-glutathione. The enzyme catalyses prostaglandin A2 + glutathione = prostaglandin A2-S-(S)-glutathione. It catalyses the reaction 11(S)-hydroxy-14(S),15(S)-epoxy-(5Z,8Z,12E)-eicosatrienoate + glutathione = (11S,15S)-dihydroxy-14(R)-S-glutathionyl-(5Z,8Z,12E)-eicosatrienoate. Its function is as follows. Conjugation of reduced glutathione to a wide number of exogenous and endogenous hydrophobic electrophiles. Involved in the formation of glutathione conjugates of both prostaglandin A2 (PGA2) and prostaglandin J2 (PGJ2). Participates in the formation of novel hepoxilin regioisomers. The sequence is that of Glutathione S-transferase Mu 1 from Homo sapiens (Human).